Consider the following 309-residue polypeptide: tRNA dimethylallyltransferase 1 (309 aa).

An ATP-binding site is contributed by 14–21; that stretch reads GPTASGKS. 16–21 is a substrate binding site; it reads TASGKS. Residues 39–42 form an interaction with substrate tRNA region; it reads DSMQ.

The protein belongs to the IPP transferase family. Monomer. Mg(2+) serves as cofactor.

The catalysed reaction is adenosine(37) in tRNA + dimethylallyl diphosphate = N(6)-dimethylallyladenosine(37) in tRNA + diphosphate. In terms of biological role, catalyzes the transfer of a dimethylallyl group onto the adenine at position 37 in tRNAs that read codons beginning with uridine, leading to the formation of N6-(dimethylallyl)adenosine (i(6)A). The polypeptide is tRNA dimethylallyltransferase 1 (Pelobacter propionicus (strain DSM 2379 / NBRC 103807 / OttBd1)).